The primary structure comprises 185 residues: UPF0200 protein TK1334 (185 aa).

Residue 7 to 14 (GMPGSGKS) participates in ATP binding.

This sequence belongs to the UPF0200 family.

This Thermococcus kodakarensis (strain ATCC BAA-918 / JCM 12380 / KOD1) (Pyrococcus kodakaraensis (strain KOD1)) protein is UPF0200 protein TK1334.